The primary structure comprises 658 residues: Zinc finger protein 135 (658 aa).

Positions 14 to 85 (VTFEDVVVGF…ESRLPQGVYP (72 aa)) constitute a KRAB domain. The tract at residues 171 to 196 (LNPDLPHQPMTPERQSPHTWGTRGKR) is disordered. C2H2-type zinc fingers lie at residues 214 to 236 (YKCQ…HRTH), 242 to 264 (YECH…QRIH), 270 to 292 (YKCT…QRTH), 298 to 320 (YECS…ERTH), 326 to 348 (YECS…LRIH), 354 to 376 (YQCG…QRIH), 382 to 404 (YECH…QRTH), 410 to 432 (YECG…RRIH), 438 to 460 (YGCN…ERTH), 466 to 488 (YECS…QRIH), 494 to 516 (YECN…QRIH), 522 to 544 (YECN…QRIH), 550 to 572 (YECN…QRIH), 578 to 600 (YGCN…ERTH), 606 to 628 (YECH…RRIH), and 634 to 656 (YACR…QRTH).

This sequence belongs to the krueppel C2H2-type zinc-finger protein family.

The protein localises to the nucleus. In terms of biological role, plays a role in the regulation of cell morphology and cytoskeletal organization. May be involved in transcriptional regulation. The sequence is that of Zinc finger protein 135 (ZNF135) from Homo sapiens (Human).